The sequence spans 605 residues: Probable potassium transport system protein Kup 2 (605 aa).

The next 12 membrane-spanning stretches (helical) occupy residues 17 to 37, 45 to 65, 96 to 116, 139 to 159, 169 to 189, 211 to 231, 246 to 266, 286 to 306, 338 to 358, 367 to 387, 394 to 414, and 417 to 437; these read GLVF…IMTL, VLGI…VEYA, MAFA…DGVI, AQGG…IFQF, FGPI…VSII, GLAG…GEAL, AWYF…AFIL, LYIP…QALI, IYIG…MILF, AYGL…TMIF, WKVP…TANL, and LPHG…IMVI.

The protein belongs to the HAK/KUP transporter (TC 2.A.72) family.

The protein resides in the cell inner membrane. It carries out the reaction K(+)(in) + H(+)(in) = K(+)(out) + H(+)(out). Its function is as follows. Transport of potassium into the cell. Likely operates as a K(+):H(+) symporter. The protein is Probable potassium transport system protein Kup 2 of Geobacter sulfurreducens (strain ATCC 51573 / DSM 12127 / PCA).